The primary structure comprises 310 residues: Zinc-finger homeodomain protein 3 (310 aa).

The interval 1-64 is disordered; sequence MEIASQEDPI…GLGKNHDHSH (64 aa). Polar residues predominate over residues 39-56; the sequence is LNITTSNPLLVSSNSNGL. A ZF-HD dimerization-type; degenerate zinc finger spans residues 87–136; sequence YKECLKNHAATMGGNAIDGCGEFMPSGEEGSIEALTCSVCNCHRNFHRRE. Disordered regions lie at residues 184–220 and 281–310; these read TAGSNSESEDLMEEEGGGSLTFRQPPPPPSPYSYGHN and LSKKSNNVSNNVDLSAGNNDITENLASTNP. Acidic residues predominate over residues 190-199; sequence ESEDLMEEEG. The segment at residues 222-285 is a DNA-binding region (homeobox); it reads KKRFRTKFTQ…NNKQNLSKKS (64 aa). The segment covering 281 to 291 has biased composition (low complexity); it reads LSKKSNNVSNN. A compositionally biased stretch (polar residues) spans 292-310; sequence VDLSAGNNDITENLASTNP.

As to quaternary structure, homo- and heterodimer with other ZFHD proteins. Interacts with MIF2 and MIF3; these interactions prevent nuclear localization and DNA-binding to inhibit transcription regulation activity. Binds to ZHD1, ZHD2 and ZHD11. Interacts with HIPP30. Interacts with KIN10, KIN11 and FLZ8. As to expression, mostly expressed in flowers and inflorescence.

The protein resides in the nucleus. Putative transcription factor. The polypeptide is Zinc-finger homeodomain protein 3 (ZHD3) (Arabidopsis thaliana (Mouse-ear cress)).